The primary structure comprises 662 residues: Phosphomethylpyrimidine synthase (662 aa).

Substrate is bound by residues Asn235, Met264, Tyr293, His329, 349–351 (SRG), 390–393 (DGMR), and Glu429. His433 serves as a coordination point for Zn(2+). Residue Tyr456 coordinates substrate. His497 lines the Zn(2+) pocket. The [4Fe-4S] cluster site is built by Cys577, Cys580, and Cys585.

This sequence belongs to the ThiC family. Homodimer. [4Fe-4S] cluster is required as a cofactor.

The enzyme catalyses 5-amino-1-(5-phospho-beta-D-ribosyl)imidazole + S-adenosyl-L-methionine = 4-amino-2-methyl-5-(phosphooxymethyl)pyrimidine + CO + 5'-deoxyadenosine + formate + L-methionine + 3 H(+). The protein operates within cofactor biosynthesis; thiamine diphosphate biosynthesis. Its function is as follows. Catalyzes the synthesis of the hydroxymethylpyrimidine phosphate (HMP-P) moiety of thiamine from aminoimidazole ribotide (AIR) in a radical S-adenosyl-L-methionine (SAM)-dependent reaction. In Shewanella halifaxensis (strain HAW-EB4), this protein is Phosphomethylpyrimidine synthase.